The chain runs to 209 residues: ATP-dependent Clp protease proteolytic subunit (209 aa).

S107 functions as the Nucleophile in the catalytic mechanism. Residue H132 is part of the active site.

It belongs to the peptidase S14 family. In terms of assembly, fourteen ClpP subunits assemble into 2 heptameric rings which stack back to back to give a disk-like structure with a central cavity, resembling the structure of eukaryotic proteasomes.

The protein resides in the cytoplasm. It carries out the reaction Hydrolysis of proteins to small peptides in the presence of ATP and magnesium. alpha-casein is the usual test substrate. In the absence of ATP, only oligopeptides shorter than five residues are hydrolyzed (such as succinyl-Leu-Tyr-|-NHMec, and Leu-Tyr-Leu-|-Tyr-Trp, in which cleavage of the -Tyr-|-Leu- and -Tyr-|-Trp bonds also occurs).. Functionally, cleaves peptides in various proteins in a process that requires ATP hydrolysis. Has a chymotrypsin-like activity. Plays a major role in the degradation of misfolded proteins. The polypeptide is ATP-dependent Clp protease proteolytic subunit (Ruegeria pomeroyi (strain ATCC 700808 / DSM 15171 / DSS-3) (Silicibacter pomeroyi)).